Reading from the N-terminus, the 242-residue chain is NLP effector protein 8 (242 aa).

An N-terminal signal peptide occupies residues 1 to 17 (MHLTVFYLVALCTFASA). Positions 108–118 (AIMYAWYFPRD) match the Conserved undecapeptide motif motif. Residues 127 to 133 (GHRNAWE) carry the Conserved heptapeptide motif motif. N206 carries N-linked (GlcNAc...) asparagine glycosylation.

It belongs to the Necrosis inducing protein (NPP1) family.

The protein resides in the secreted. Functionally, probable secreted effector that may act as a pathogen-associated molecular pattern (PAMP) recognized by the plant immune system. The chain is NLP effector protein 8 from Plasmopara viticola (Downy mildew of grapevine).